A 443-amino-acid polypeptide reads, in one-letter code: Phosphoribosylamine--glycine ligase (443 aa).

In terms of domain architecture, ATP-grasp spans 109–324; that stretch reads RNLFKKYNIK…FLDVCFGISN (216 aa). Residue 140-202 participates in ATP binding; sequence MTGLGKDVVV…EEKLVGVEFT (63 aa). Mg(2+)-binding residues include glutamine 282, glutamate 294, and asparagine 296. Mn(2+)-binding residues include glutamine 282, glutamate 294, and asparagine 296.

This sequence belongs to the GARS family. Mg(2+) serves as cofactor. The cofactor is Mn(2+).

It carries out the reaction 5-phospho-beta-D-ribosylamine + glycine + ATP = N(1)-(5-phospho-beta-D-ribosyl)glycinamide + ADP + phosphate + H(+). The protein operates within purine metabolism; IMP biosynthesis via de novo pathway; N(1)-(5-phospho-D-ribosyl)glycinamide from 5-phospho-alpha-D-ribose 1-diphosphate: step 2/2. The polypeptide is Phosphoribosylamine--glycine ligase (Methanococcus vannielii (strain ATCC 35089 / DSM 1224 / JCM 13029 / OCM 148 / SB)).